A 433-amino-acid polypeptide reads, in one-letter code: Cysteine--tRNA ligase (433 aa).

Position 4 (Cys4) interacts with Zn(2+). The short motif at 6–16 (PTVYDTAHIGN) is the 'HIGH' region element. Zn(2+) contacts are provided by Cys188, His213, and Glu217. The short motif at 246-250 (KMSKS) is the 'KMSKS' region element. ATP is bound at residue Lys249.

This sequence belongs to the class-I aminoacyl-tRNA synthetase family. Monomer. Zn(2+) serves as cofactor.

The protein resides in the cytoplasm. It carries out the reaction tRNA(Cys) + L-cysteine + ATP = L-cysteinyl-tRNA(Cys) + AMP + diphosphate. The chain is Cysteine--tRNA ligase from Wolbachia sp. subsp. Brugia malayi (strain TRS).